The following is a 181-amino-acid chain: Bradykinin potentiating and C-type natriuretic peptides (181 aa).

The N-terminal stretch at 1 to 23 is a signal peptide; sequence MFVSRLAASGLLLLALLAVSLDG. A propeptide spanning residues 24–27 is cleaved from the precursor; the sequence is KPLQ. Gln28 and Gln31 each carry pyrrolidone carboxylic acid. Positions 41–43 are excised as a propeptide; that stretch reads LVV. Residue Gln44 is modified to Pyrrolidone carboxylic acid. Residues 50–52 constitute a propeptide that is removed on maturation; it reads TQL. A Pyrrolidone carboxylic acid modification is found at Gln53. The propeptide occupies 59–159; the sequence is AGGTTALREE…ARRLKGLAKK (101 aa). The disordered stretch occupies residues 74-150; that stretch reads EAALDTPPAG…GGGCGGGGGA (77 aa). Low complexity predominate over residues 104–114; sequence SKGASATSAAS. Residues 140-150 are compositionally biased toward gly residues; that stretch reads AGGGCGGGGGA. Residues Cys165 and Cys181 are joined by a disulfide bond.

In the N-terminal section; belongs to the bradykinin-potentiating peptide family. This sequence in the C-terminal section; belongs to the natriuretic peptide family. As to expression, venom gland.

It localises to the secreted. Functionally, bradykinin-potentiating peptide both inhibits the activity of the angiotensin-converting enzyme (ACE) and enhances the action of bradykinin by inhibiting the peptidases that inactivate it. It acts as an indirect hypotensive agent. Synthetic Cdt1a, Cdt1b and the short hexapeptide Cdt3 are able to potentiate the hypotensive effect mediated by Bk on the blood pressure of anesthetized rats. Its function is as follows. has a vasorelaxant activity in rat aortic strips and a diuretic potency in anesthetized rats. May act by activating natriuretic receptors (NPR1 and/or NPR2). This Crotalus durissus terrificus (South American rattlesnake) protein is Bradykinin potentiating and C-type natriuretic peptides.